Reading from the N-terminus, the 695-residue chain is MSAFEQAAREQAARLRAEIAQHNIRYYVYDEPSITDADYDALMRELMALEAQHPELVTPDSPTQRVGAAPLAEFGSVRHAVPMLSLGNGFEDEDVLAFDKRVSDTLREAGLLGPAEQAHYFCELKLDGLAISLRYENGELVQAATRGDGQEGEDVTANIRTIRAIPLQLRAGAPAVLEVRGEVLMNRADFEKLNQKQAARGEKIFVNPRNAAAGSLRQLDPRVTAQRPLRFFAYSWGEVQGLSRDDAPAFDEASPGLVSTLPRDTHGGMLDWLAGLGLPVNVRFNHKAQGAEGLLAFYRRIGAERGSLPYDIDGLVYKVDALAAQRVLGYVARAPRWALAHKFPAEEATTELLDIEVQVGRTGAITPVARLKPVFVGGVTVTNATLHNEDEIRRKDVRIGDRVIVRRAGDVIPEVVGPVLEKRSGELPQFVMPTHCPICGSAIERLVDEAIARCTGGLFCPAQRKQTLLHAAGRKALDIEGLGEKLVEQLVDNGSLKTLADVFRLNAFELAALDRMGKKSADNLVAAIDQARRPSLGRLLFALGIRHVGETTARDVARHFGNIDAIMDADEAALLAVPDVGPVVAGSIHRFFQEAHNREVIRELEKQGVHPQAEAQLQSGDLAGKTFVLTGTMPTWSRDEATRHILAAGGKVSGSVSKKTAYVVAGEEAGSKLVKARELGVTILDEDGLKALLSQ.

Residues 36–40 (DADYD), 85–86 (SL), and E123 each bind NAD(+). K125 (N6-AMP-lysine intermediate) is an active-site residue. Residues R146, E182, K318, and K342 each contribute to the NAD(+) site. Residues C436, C439, C454, and C460 each coordinate Zn(2+). The 79-residue stretch at 617–695 (LQSGDLAGKT…EDGLKALLSQ (79 aa)) folds into the BRCT domain.

This sequence belongs to the NAD-dependent DNA ligase family. LigA subfamily. Mg(2+) serves as cofactor. Mn(2+) is required as a cofactor.

The catalysed reaction is NAD(+) + (deoxyribonucleotide)n-3'-hydroxyl + 5'-phospho-(deoxyribonucleotide)m = (deoxyribonucleotide)n+m + AMP + beta-nicotinamide D-nucleotide.. In terms of biological role, DNA ligase that catalyzes the formation of phosphodiester linkages between 5'-phosphoryl and 3'-hydroxyl groups in double-stranded DNA using NAD as a coenzyme and as the energy source for the reaction. It is essential for DNA replication and repair of damaged DNA. This Bordetella avium (strain 197N) protein is DNA ligase.